Consider the following 303-residue polypeptide: AP2-like ethylene-responsive transcription factor At1g79700 (303 aa).

Positions 1–10 (MAKVSGRSKK) are enriched in basic residues. Residues 1–55 (MAKVSGRSKKTIVDDEISDKTASASESASIALTSKRKRKSPPRNAPLQRSSPYRG) are disordered. Positions 20–32 (KTASASESASIAL) are enriched in polar residues. DNA-binding regions (AP2/ERF) lie at residues 52–118 (PYRG…LNFP) and 154–202 (KYRG…TNFD). Residues 212-259 (AADKADSDSKPIRSPSREPESSDDNKSPKSEEVIEPSTSPEVIPTRRS) form a disordered region. Residues 214-243 (DKADSDSKPIRSPSREPESSDDNKSPKSEE) are compositionally biased toward basic and acidic residues.

It belongs to the AP2/ERF transcription factor family. AP2 subfamily.

The protein resides in the nucleus. In terms of biological role, probably acts as a transcriptional activator. Binds to the GCC-box pathogenesis-related promoter element. May be involved in the regulation of gene expression by stress factors and by components of stress signal transduction pathways. The polypeptide is AP2-like ethylene-responsive transcription factor At1g79700 (Arabidopsis thaliana (Mouse-ear cress)).